Reading from the N-terminus, the 452-residue chain is CUGBP Elav-like family member 3 (452 aa).

3 consecutive RRM domains span residues 7–88 (IKLF…PADS), 94–174 (RKLF…FADT), and 367–445 (CNIF…LKRP).

The protein belongs to the CELF/BRUNOL family.

It is found in the nucleus. The protein resides in the cytoplasm. In terms of biological role, RNA-binding protein that may be involved in the regulation of pre-mRNA alternative splicing. The chain is CUGBP Elav-like family member 3 (celf3) from Danio rerio (Zebrafish).